The chain runs to 425 residues: Light-independent protochlorophyllide reductase subunit N (425 aa).

3 residues coordinate [4Fe-4S] cluster: C17, C42, and C103.

It belongs to the BchN/ChlN family. In terms of assembly, protochlorophyllide reductase is composed of three subunits; ChlL, ChlN and ChlB. Forms a heterotetramer of two ChlB and two ChlN subunits. The cofactor is [4Fe-4S] cluster.

It catalyses the reaction chlorophyllide a + oxidized 2[4Fe-4S]-[ferredoxin] + 2 ADP + 2 phosphate = protochlorophyllide a + reduced 2[4Fe-4S]-[ferredoxin] + 2 ATP + 2 H2O. It functions in the pathway porphyrin-containing compound metabolism; chlorophyll biosynthesis (light-independent). In terms of biological role, component of the dark-operative protochlorophyllide reductase (DPOR) that uses Mg-ATP and reduced ferredoxin to reduce ring D of protochlorophyllide (Pchlide) to form chlorophyllide a (Chlide). This reaction is light-independent. The NB-protein (ChlN-ChlB) is the catalytic component of the complex. The sequence is that of Light-independent protochlorophyllide reductase subunit N from Parasynechococcus marenigrum (strain WH8102).